The following is a 315-amino-acid chain: Olfactory receptor 2V1 (315 aa).

Topologically, residues 1 to 31 are extracellular; that stretch reads MGRWVNQSYTDGFFLLGIFSHSQTDLVLFSA. Asn-6 carries N-linked (GlcNAc...) asparagine glycosylation. A helical transmembrane segment spans residues 32-52; sequence VMVVFTVALCGNVLLIFLIYL. At 53-58 the chain is on the cytoplasmic side; that stretch reads DAGLHT. A helical membrane pass occupies residues 59-79; sequence PMYFFLSQLSLMDLMLVCNIV. The Extracellular segment spans residues 80-99; that stretch reads PKMAANFLSGRKSISFVGCG. A disulfide bond links Cys-98 and Cys-180. The helical transmembrane segment at 100 to 120 threads the bilayer; sequence IQIGFFVSLVGSEGLLLGLMA. Over 121-149 the chain is Cytoplasmic; it reads YDRYVAVSHPLHYPILMNQRVCLQITGSS. A helical membrane pass occupies residues 150 to 170; that stretch reads WAFGIIDGVIQMVAAMGLPYC. The Extracellular segment spans residues 171–198; that stretch reads GSRSVDHFFCEVQALLKLACADTSLFDT. The helical transmembrane segment at 199–219 threads the bilayer; that stretch reads LLFACCVFMLLLPFSIIMASY. Topologically, residues 220–238 are cytoplasmic; it reads ACILGAVLRIRSAQAWKKA. The chain crosses the membrane as a helical span at residues 239–259; that stretch reads LATCSSHLTAVTLFYGAAMFM. The Extracellular segment spans residues 260 to 272; that stretch reads YLRPRRYRAPSHD. The helical transmembrane segment at 273 to 293 threads the bilayer; it reads KVASIFYTVLTPMLNPLIYSL. The Cytoplasmic segment spans residues 294 to 315; the sequence is RNGEVMGALRKGLDRCRIGSQH.

This sequence belongs to the G-protein coupled receptor 1 family.

Its subcellular location is the cell membrane. In terms of biological role, odorant receptor. In Homo sapiens (Human), this protein is Olfactory receptor 2V1 (OR2V1).